Reading from the N-terminus, the 1149-residue chain is DNA polymerase (1149 aa).

Positions 1–28 (MSLVQSHGTSGLFTEPPNSINQQESSGP) are enriched in polar residues. The disordered stretch occupies residues 1-49 (MSLVQSHGTSGLFTEPPNSINQQESSGPSLPAQDATQASASSARAGATP). Residues 31 to 49 (PAQDATQASASSARAGATP) show a composition bias toward low complexity.

This sequence belongs to the DNA polymerase type-B family. In terms of assembly, heterodimer with the terminal protein; this heterodimer binds to bp 9 to 18 of the genome. Forms a complex with viral pTP, DBP and hosts NFIA and POU2F1/OCT1 for initiation of replication.

The protein resides in the host nucleus. The enzyme catalyses DNA(n) + a 2'-deoxyribonucleoside 5'-triphosphate = DNA(n+1) + diphosphate. Eukaryotic-type DNA polymerase involved in viral genomic replication. DNA synthesis is protein primed, and acts in a strand displacement replication. Assembles in complex with viral pTP, DBP, host NFIA and host POU2F1/OCT1 on viral origin of replication. The polymerase covalently transfers dCMP onto pTP, thereby initiating complementary strand synthesis. This is DNA polymerase from Canine adenovirus serotype 1 (strain CLL) (CAdV-1).